The chain runs to 369 residues: Anhydro-N-acetylmuramic acid kinase (369 aa).

12–19 contributes to the ATP binding site; it reads GTSLDGVD.

This sequence belongs to the anhydro-N-acetylmuramic acid kinase family.

It carries out the reaction 1,6-anhydro-N-acetyl-beta-muramate + ATP + H2O = N-acetyl-D-muramate 6-phosphate + ADP + H(+). Its pathway is amino-sugar metabolism; 1,6-anhydro-N-acetylmuramate degradation. It participates in cell wall biogenesis; peptidoglycan recycling. Functionally, catalyzes the specific phosphorylation of 1,6-anhydro-N-acetylmuramic acid (anhMurNAc) with the simultaneous cleavage of the 1,6-anhydro ring, generating MurNAc-6-P. Is required for the utilization of anhMurNAc either imported from the medium or derived from its own cell wall murein, and thus plays a role in cell wall recycling. The polypeptide is Anhydro-N-acetylmuramic acid kinase (Escherichia coli (strain SE11)).